A 62-amino-acid polypeptide reads, in one-letter code: Small ribosomal subunit protein uS14 (62 aa).

Zn(2+)-binding residues include Cys25, Cys28, Cys41, and Cys44.

This sequence belongs to the universal ribosomal protein uS14 family. Zinc-binding uS14 subfamily. As to quaternary structure, part of the 30S ribosomal subunit. Contacts proteins S3 and S10. Zn(2+) is required as a cofactor.

Binds 16S rRNA, required for the assembly of 30S particles and may also be responsible for determining the conformation of the 16S rRNA at the A site. This Aquifex aeolicus (strain VF5) protein is Small ribosomal subunit protein uS14.